The primary structure comprises 257 residues: Deoxyribose-phosphate aldolase (257 aa).

The Proton donor/acceptor role is filled by Asp-102. Lys-166 acts as the Schiff-base intermediate with acetaldehyde in catalysis. Lys-198 serves as the catalytic Proton donor/acceptor.

The protein belongs to the DeoC/FbaB aldolase family. DeoC type 2 subfamily.

The protein localises to the cytoplasm. The catalysed reaction is 2-deoxy-D-ribose 5-phosphate = D-glyceraldehyde 3-phosphate + acetaldehyde. Its pathway is carbohydrate degradation; 2-deoxy-D-ribose 1-phosphate degradation; D-glyceraldehyde 3-phosphate and acetaldehyde from 2-deoxy-alpha-D-ribose 1-phosphate: step 2/2. Its function is as follows. Catalyzes a reversible aldol reaction between acetaldehyde and D-glyceraldehyde 3-phosphate to generate 2-deoxy-D-ribose 5-phosphate. The sequence is that of Deoxyribose-phosphate aldolase from Shewanella amazonensis (strain ATCC BAA-1098 / SB2B).